Reading from the N-terminus, the 383-residue chain is S-adenosylmethionine synthase (383 aa).

His15 contributes to the ATP binding site. Asp17 provides a ligand contact to Mg(2+). Residue Glu43 coordinates K(+). L-methionine-binding residues include Glu56 and Gln99. The segment at Gln99–Arg109 is flexible loop. Residues Asp164–Lys166, Arg230–Phe231, Asp239, Arg245–Lys246, Ala262, and Lys266 each bind ATP. Asp239 lines the L-methionine pocket. Lys270 contributes to the L-methionine binding site.

Belongs to the AdoMet synthase family. In terms of assembly, homotetramer; dimer of dimers. It depends on Mg(2+) as a cofactor. The cofactor is K(+).

Its subcellular location is the cytoplasm. It carries out the reaction L-methionine + ATP + H2O = S-adenosyl-L-methionine + phosphate + diphosphate. It participates in amino-acid biosynthesis; S-adenosyl-L-methionine biosynthesis; S-adenosyl-L-methionine from L-methionine: step 1/1. In terms of biological role, catalyzes the formation of S-adenosylmethionine (AdoMet) from methionine and ATP. The overall synthetic reaction is composed of two sequential steps, AdoMet formation and the subsequent tripolyphosphate hydrolysis which occurs prior to release of AdoMet from the enzyme. The chain is S-adenosylmethionine synthase from Pectobacterium atrosepticum (strain SCRI 1043 / ATCC BAA-672) (Erwinia carotovora subsp. atroseptica).